The sequence spans 276 residues: Undecaprenyl-diphosphatase (276 aa).

Helical transmembrane passes span 6-26, 49-69, 89-109, 117-137, 151-171, 181-201, 224-244, and 256-276; these read IEIL…WLPI, EMFF…MFWN, FSLW…GILF, LHTP…FIVI, LADI…LSLI, IIGA…TFFL, AELL…VFVI, and FKVF…ITAI.

Belongs to the UppP family.

It localises to the cell membrane. The catalysed reaction is di-trans,octa-cis-undecaprenyl diphosphate + H2O = di-trans,octa-cis-undecaprenyl phosphate + phosphate + H(+). Catalyzes the dephosphorylation of undecaprenyl diphosphate (UPP). Confers resistance to bacitracin. The sequence is that of Undecaprenyl-diphosphatase from Enterococcus faecalis (Streptococcus faecalis).